Reading from the N-terminus, the 189-residue chain is uncharacterized protein (189 aa).

The HTH tetR-type domain maps to R2–R62. Residues T25–F44 constitute a DNA-binding region (H-T-H motif).

This is an uncharacterized protein from Bacillus subtilis (strain 168).